The following is a 312-amino-acid chain: Olfactory receptor 1J21 (312 aa).

7 helical membrane passes run 29 to 49 (ALFL…ILLI), 58 to 78 (PMYF…SVTA), 95 to 115 (AGCV…NFLL), 143 to 163 (LLVM…TLLF), 197 to 217 (LVIL…ILVS), 241 to 261 (CGSH…LYFF), and 272 to 292 (VIVA…IYSL).

Belongs to the G-protein coupled receptor 1 family.

It localises to the cell membrane. Functionally, odorant receptor. Activated by (+) and (-)-carvone. The protein is Olfactory receptor 1J21 of Mus musculus (Mouse).